A 346-amino-acid chain; its full sequence is Sensor protein kinase GraS (346 aa).

Helical transmembrane passes span 18 to 38 (IFWILFLNILMLGISLIDYDF) and 43 to 63 (LFYIVSLNLSLTLIFLILTFF). Positions 126–332 (EFVHDIKTPV…TVKLIFPLQN (207 aa)) constitute a Histidine kinase domain.

In terms of assembly, interacts with GraX.

The protein localises to the cell membrane. It carries out the reaction ATP + protein L-histidine = ADP + protein N-phospho-L-histidine.. In terms of biological role, member of the two-component regulatory system GraR/GraS involved in resistance against cationic antimicrobial peptides (CAMPs). Functions as a sensor protein kinase which phosphorylates GraR through the auxiliary protein GraX. In turn, GraR up-regulates many genes such as adhesins, exoproteins, transporters, toxins, and proteins involved in cell wall synthesis. Down-regulates the expression of many genes involved in RNA and amino acid synthesis or glycolysis. The protein is Sensor protein kinase GraS (graS) of Staphylococcus aureus (strain MRSA252).